The primary structure comprises 282 residues: Heterogeneous nuclear ribonucleoprotein C (282 aa).

The region spanning 17 to 88 is the RRM domain; sequence SRVFIGNLNT…QVLDINLAAE (72 aa). Disordered stretches follow at residues 131 to 177 and 208 to 282; these read APPP…RLKG and QSKQ…EEDS. Residues 141–147 carry the Nuclear localization signal motif; it reads PSKRQRV. Residues 161-172 show a composition bias toward low complexity; it reads SKSGQRGGSSKS. A coiled-coil region spans residues 177–217; that stretch reads GDDLQAIKKELSQIKQRVDSLLENLERIERDQSKQDTKLDD. Composition is skewed to basic and acidic residues over residues 208 to 217 and 224 to 235; these read QSKQDTKLDD and LKKEETGVKLIE. Acidic residues-rich tracts occupy residues 236–257 and 265–282; these read ETGDSAEEGDLLDDDEQGEDTL and KETEEGEDEGDSANEEDS.

This sequence belongs to the RRM HNRPC family. RALY subfamily. Tetramer.

It localises to the nucleus. In terms of biological role, binds pre-mRNA and nucleates the assembly of 40S hnRNP particles. Interacts with poly-U tracts in the 3'-UTR or 5'-UTR of mRNA and modulates the stability and the level of translation of bound mRNA molecules. Single HNRNPC tetramers bind 230-240 nucleotides. Trimers of HNRNPC tetramers bind 700 nucleotides. May play a role in the early steps of spliceosome assembly and pre-mRNA splicing. N6-methyladenosine (m6A) has been shown to alter the local structure in mRNAs and long non-coding RNAs (lncRNAs) via a mechanism named 'm(6)A-switch', facilitating binding of HNRNPC, leading to regulation of mRNA splicing. The polypeptide is Heterogeneous nuclear ribonucleoprotein C (hnrnpc) (Xenopus laevis (African clawed frog)).